Here is a 378-residue protein sequence, read N- to C-terminus: Erythronate-4-phosphate dehydrogenase (378 aa).

Positions 45 and 66 each coordinate substrate. Residues aspartate 146 and threonine 175 each coordinate NAD(+). Arginine 208 is a catalytic residue. Residue aspartate 232 participates in NAD(+) binding. Glutamate 237 is an active-site residue. The active-site Proton donor is histidine 254. NAD(+) is bound at residue glycine 257. Tyrosine 258 contributes to the substrate binding site.

This sequence belongs to the D-isomer specific 2-hydroxyacid dehydrogenase family. PdxB subfamily. As to quaternary structure, homodimer.

The protein localises to the cytoplasm. The catalysed reaction is 4-phospho-D-erythronate + NAD(+) = (R)-3-hydroxy-2-oxo-4-phosphooxybutanoate + NADH + H(+). Its pathway is cofactor biosynthesis; pyridoxine 5'-phosphate biosynthesis; pyridoxine 5'-phosphate from D-erythrose 4-phosphate: step 2/5. Catalyzes the oxidation of erythronate-4-phosphate to 3-hydroxy-2-oxo-4-phosphonooxybutanoate. The polypeptide is Erythronate-4-phosphate dehydrogenase (Pectobacterium carotovorum subsp. carotovorum (strain PC1)).